The chain runs to 126 residues: B3 domain-containing protein At5g54067 (126 aa).

Residues 20–118 (SDIVGNVVLP…KFVVLNFQYS (99 aa)) constitute a DNA-binding region (TF-B3).

It is found in the nucleus. This Arabidopsis thaliana (Mouse-ear cress) protein is B3 domain-containing protein At5g54067.